Consider the following 357-residue polypeptide: NAD-dependent protein deacetylase HST2 (357 aa).

Serine 2 carries the post-translational modification N-acetylserine. The Deacetylase sirtuin-type domain maps to 5–284 (TASTEMSVRK…EQLVEELGWQ (280 aa)). Residues 32 to 52 (GAGI…TGLY) and 115 to 118 (QNID) each bind NAD(+). Residue histidine 135 is the Proton acceptor of the active site. The Zn(2+) site is built by cysteine 143, cysteine 146, cysteine 170, and cysteine 173. NAD(+)-binding positions include 223–225 (GTS), 248–250 (NLE), and serine 270. Positions 317–329 (LDQSEHESADKKD) are enriched in basic and acidic residues. Residues 317–357 (LDQSEHESADKKDKKLQRLNGHDSDEDGASNSSSSQKAAKE) are disordered. Serine 340 carries the phosphoserine modification.

Belongs to the sirtuin family. Class I subfamily. As to quaternary structure, homotrimer. Monomer. Homotrimeric in its unliganded state. Undergoes a trimer-monomer transition upon acetyl-lysine substrate binding. Requires Zn(2+) as cofactor.

It is found in the cytoplasm. Its subcellular location is the nucleus. It catalyses the reaction N(6)-acetyl-L-lysyl-[protein] + NAD(+) + H2O = 2''-O-acetyl-ADP-D-ribose + nicotinamide + L-lysyl-[protein]. Its activity is regulated as follows. Inhibited by ADP-ribose and nicotinamide. In terms of biological role, NAD-dependent histone deacetylase that is involved in nuclear silencing events. Derepresses subtelomeric silencing and increases repression in nucleolar (rDNA) silencing. Its function is negatively regulated by active nuclear export. This is NAD-dependent protein deacetylase HST2 (HST2) from Saccharomyces cerevisiae (strain ATCC 204508 / S288c) (Baker's yeast).